Consider the following 307-residue polypeptide: Ribonuclease Z (307 aa).

Residues histidine 63, histidine 65, aspartate 67, histidine 68, histidine 143, aspartate 213, and histidine 271 each coordinate Zn(2+). Catalysis depends on aspartate 67, which acts as the Proton acceptor.

It belongs to the RNase Z family. In terms of assembly, homodimer. Requires Zn(2+) as cofactor.

The catalysed reaction is Endonucleolytic cleavage of RNA, removing extra 3' nucleotides from tRNA precursor, generating 3' termini of tRNAs. A 3'-hydroxy group is left at the tRNA terminus and a 5'-phosphoryl group is left at the trailer molecule.. Functionally, zinc phosphodiesterase, which displays some tRNA 3'-processing endonuclease activity. Probably involved in tRNA maturation, by removing a 3'-trailer from precursor tRNA. The chain is Ribonuclease Z from Lactococcus lactis subsp. cremoris (strain SK11).